Consider the following 707-residue polypeptide: Leucine-rich repeat neuronal protein 3 (707 aa).

A signal peptide spans 1–22; it reads MKDAPLQIHVLLGLAITALVQA. The LRRNT domain maps to 23–69; sequence GDKKVDCPQLCTCEIRPWFTPRSIYMEASTVDCNDLGLLNFPARLPA. Topologically, residues 23–626 are extracellular; sequence GDKKVDCPQL…DGKENGKSHT (604 aa). LRR repeat units follow at residues 70–91, 93–114, 117–138, 141–162, 165–186, 189–210, 213–234, 237–258, 261–282, 285–304, 310–332, and 335–358; these read DTQI…TDFP, NLTG…NVQK, QLLS…CLYG, NLQE…AFVG, NLLR…WFEA, NLEI…NFQP, KLRS…ALVG, NLES…ALQK, NLKF…DFSN, HLKE…DSLA, DLRK…AFFR, and KLES…ESLP. N-linked (GlcNAc...) asparagine glycosylation is found at Asn-93 and Asn-103. Asn-223 carries N-linked (GlcNAc...) asparagine glycosylation. Positions 368–421 constitute an LRRCT domain; sequence NPIRCDCVIRWINMNKTNIRFMEPDSLFCVDPPEFQGQNVRQVHFRDMMEICLP. Asn-382 carries an N-linked (GlcNAc...) asparagine glycan. In terms of domain architecture, Ig-like C2-type spans 421–514; it reads PLIAPESFPS…DLKSIMIKVG (94 aa). Cys-444 and Cys-496 are joined by a disulfide. Asn-522, Asn-579, and Asn-608 each carry an N-linked (GlcNAc...) asparagine glycan. In terms of domain architecture, Fibronectin type-III spans 523 to 614; it reads GSLNIKIRDI…QCVNVTTKSL (92 aa). The helical transmembrane segment at 627–647 threads the bilayer; sequence VFVACVGGLLGIIGVMCLFGC. The Cytoplasmic portion of the chain corresponds to 648 to 707; the sequence is VSQEGNCENEHSYTVNHCHKPTLAFSELYPPLINLWESSKEKPASLEVKATAIGVPTSMS.

The protein resides in the membrane. The sequence is that of Leucine-rich repeat neuronal protein 3 (Lrrn3) from Rattus norvegicus (Rat).